Here is a 206-residue protein sequence, read N- to C-terminus: Small ribosomal subunit protein uS4 (206 aa).

In terms of domain architecture, S4 RNA-binding spans 96-156; sequence TRLDNVVYRM…EKSRTQARIK (61 aa).

This sequence belongs to the universal ribosomal protein uS4 family. In terms of assembly, part of the 30S ribosomal subunit. Contacts protein S5. The interaction surface between S4 and S5 is involved in control of translational fidelity.

One of the primary rRNA binding proteins, it binds directly to 16S rRNA where it nucleates assembly of the body of the 30S subunit. Its function is as follows. With S5 and S12 plays an important role in translational accuracy. This is Small ribosomal subunit protein uS4 from Shewanella amazonensis (strain ATCC BAA-1098 / SB2B).